A 266-amino-acid polypeptide reads, in one-letter code: Ribosomal RNA small subunit methyltransferase A (266 aa).

6 residues coordinate S-adenosyl-L-methionine: asparagine 16, leucine 18, glycine 43, glutamate 64, aspartate 89, and asparagine 110.

This sequence belongs to the class I-like SAM-binding methyltransferase superfamily. rRNA adenine N(6)-methyltransferase family. RsmA subfamily.

It is found in the cytoplasm. The enzyme catalyses adenosine(1518)/adenosine(1519) in 16S rRNA + 4 S-adenosyl-L-methionine = N(6)-dimethyladenosine(1518)/N(6)-dimethyladenosine(1519) in 16S rRNA + 4 S-adenosyl-L-homocysteine + 4 H(+). Its function is as follows. Specifically dimethylates two adjacent adenosines (A1518 and A1519) in the loop of a conserved hairpin near the 3'-end of 16S rRNA in the 30S particle. May play a critical role in biogenesis of 30S subunits. This is Ribosomal RNA small subunit methyltransferase A from Marinomonas sp. (strain MWYL1).